A 71-amino-acid chain; its full sequence is UPF0352 protein Ssed_1809 (71 aa).

The protein belongs to the UPF0352 family.

This chain is UPF0352 protein Ssed_1809, found in Shewanella sediminis (strain HAW-EB3).